The chain runs to 130 residues: Small ribosomal subunit protein uS9 (130 aa).

It belongs to the universal ribosomal protein uS9 family.

This chain is Small ribosomal subunit protein uS9, found in Shewanella pealeana (strain ATCC 700345 / ANG-SQ1).